Consider the following 223-residue polypeptide: Deoxyribose-phosphate aldolase (223 aa).

D91 (proton donor/acceptor) is an active-site residue. The active-site Schiff-base intermediate with acetaldehyde is the K153. K182 (proton donor/acceptor) is an active-site residue.

This sequence belongs to the DeoC/FbaB aldolase family. DeoC type 1 subfamily.

It is found in the cytoplasm. The catalysed reaction is 2-deoxy-D-ribose 5-phosphate = D-glyceraldehyde 3-phosphate + acetaldehyde. Its pathway is carbohydrate degradation; 2-deoxy-D-ribose 1-phosphate degradation; D-glyceraldehyde 3-phosphate and acetaldehyde from 2-deoxy-alpha-D-ribose 1-phosphate: step 2/2. Functionally, catalyzes a reversible aldol reaction between acetaldehyde and D-glyceraldehyde 3-phosphate to generate 2-deoxy-D-ribose 5-phosphate. This chain is Deoxyribose-phosphate aldolase, found in Yersinia enterocolitica serotype O:8 / biotype 1B (strain NCTC 13174 / 8081).